A 675-amino-acid chain; its full sequence is Acyl-coenzyme A oxidase 3, peroxisomal (675 aa).

Residues 1-34 (MSDNRALRRAHVLANHILQSNPPSSNPSLSRELC) constitute a peroxisome transit peptide. 442–457 (AVGGQGVKTENLVGQL) is an FAD binding site.

The protein belongs to the acyl-CoA oxidase family. FAD is required as a cofactor. As to expression, most abundant in flowers and senescing rosette leaves. Lower expression in hypocotyls, stems, young rosette leaves, cotyledons, cauline leaves and root tip of young seedlings.

Its subcellular location is the peroxisome. The enzyme catalyses a 2,3-saturated acyl-CoA + O2 = a (2E)-enoyl-CoA + H2O2. Its pathway is lipid metabolism; peroxisomal fatty acid beta-oxidation. In terms of biological role, catalyzes the desaturation of medium-chain acyl-CoAs to 2-trans-enoyl-CoAs. Active on C8:0- to C14:0-CoA with a maximal activity on C12:0-CoA. This chain is Acyl-coenzyme A oxidase 3, peroxisomal (ACX3), found in Arabidopsis thaliana (Mouse-ear cress).